Consider the following 119-residue polypeptide: Large ribosomal subunit protein uL18 (119 aa).

Belongs to the universal ribosomal protein uL18 family. Part of the 50S ribosomal subunit; part of the 5S rRNA/L5/L18/L25 subcomplex. Contacts the 5S and 23S rRNAs.

Its function is as follows. This is one of the proteins that bind and probably mediate the attachment of the 5S RNA into the large ribosomal subunit, where it forms part of the central protuberance. This chain is Large ribosomal subunit protein uL18, found in Tropheryma whipplei (strain TW08/27) (Whipple's bacillus).